Here is a 336-residue protein sequence, read N- to C-terminus: Holliday junction branch migration complex subunit RuvB (336 aa).

A large ATPase domain (RuvB-L) region spans residues 4–184 (ADRIISAIAK…FGIVQRLEFY (181 aa)). Residues isoleucine 23, arginine 24, glycine 65, lysine 68, threonine 69, threonine 70, 131 to 133 (EDY), arginine 174, tyrosine 184, and arginine 221 contribute to the ATP site. Threonine 69 contacts Mg(2+). Residues 185–255 (SIEDLTSIVM…IAKAALAMLD (71 aa)) form a small ATPAse domain (RuvB-S) region. Positions 258-336 (QAGFDYLDRK…HFGLAKLADK (79 aa)) are head domain (RuvB-H). Residues arginine 294, arginine 313, and arginine 318 each coordinate DNA.

It belongs to the RuvB family. As to quaternary structure, homohexamer. Forms an RuvA(8)-RuvB(12)-Holliday junction (HJ) complex. HJ DNA is sandwiched between 2 RuvA tetramers; dsDNA enters through RuvA and exits via RuvB. An RuvB hexamer assembles on each DNA strand where it exits the tetramer. Each RuvB hexamer is contacted by two RuvA subunits (via domain III) on 2 adjacent RuvB subunits; this complex drives branch migration. In the full resolvosome a probable DNA-RuvA(4)-RuvB(12)-RuvC(2) complex forms which resolves the HJ.

It is found in the cytoplasm. It carries out the reaction ATP + H2O = ADP + phosphate + H(+). Functionally, the RuvA-RuvB-RuvC complex processes Holliday junction (HJ) DNA during genetic recombination and DNA repair, while the RuvA-RuvB complex plays an important role in the rescue of blocked DNA replication forks via replication fork reversal (RFR). RuvA specifically binds to HJ cruciform DNA, conferring on it an open structure. The RuvB hexamer acts as an ATP-dependent pump, pulling dsDNA into and through the RuvAB complex. RuvB forms 2 homohexamers on either side of HJ DNA bound by 1 or 2 RuvA tetramers; 4 subunits per hexamer contact DNA at a time. Coordinated motions by a converter formed by DNA-disengaged RuvB subunits stimulates ATP hydrolysis and nucleotide exchange. Immobilization of the converter enables RuvB to convert the ATP-contained energy into a lever motion, pulling 2 nucleotides of DNA out of the RuvA tetramer per ATP hydrolyzed, thus driving DNA branch migration. The RuvB motors rotate together with the DNA substrate, which together with the progressing nucleotide cycle form the mechanistic basis for DNA recombination by continuous HJ branch migration. Branch migration allows RuvC to scan DNA until it finds its consensus sequence, where it cleaves and resolves cruciform DNA. The chain is Holliday junction branch migration complex subunit RuvB from Actinobacillus succinogenes (strain ATCC 55618 / DSM 22257 / CCUG 43843 / 130Z).